The chain runs to 272 residues: Bis(5'-nucleosyl)-tetraphosphatase, symmetrical (272 aa).

Belongs to the Ap4A hydrolase family.

The catalysed reaction is P(1),P(4)-bis(5'-adenosyl) tetraphosphate + H2O = 2 ADP + 2 H(+). Functionally, hydrolyzes diadenosine 5',5'''-P1,P4-tetraphosphate to yield ADP. The protein is Bis(5'-nucleosyl)-tetraphosphatase, symmetrical of Ectopseudomonas mendocina (strain ymp) (Pseudomonas mendocina).